The primary structure comprises 175 residues: NADH-ubiquinone oxidoreductase chain 6 (175 aa).

5 helical membrane passes run 1-21 (MMTY…VGFS), 25-45 (SPIY…GIVL), 48-68 (GGSF…LVVF), 88-108 (TVLS…GYCI), and 149-169 (YGTW…LVVM).

The protein belongs to the complex I subunit 6 family. As to quaternary structure, core subunit of respiratory chain NADH dehydrogenase (Complex I) which is composed of 45 different subunits.

The protein resides in the mitochondrion inner membrane. It carries out the reaction a ubiquinone + NADH + 5 H(+)(in) = a ubiquinol + NAD(+) + 4 H(+)(out). Core subunit of the mitochondrial membrane respiratory chain NADH dehydrogenase (Complex I) which catalyzes electron transfer from NADH through the respiratory chain, using ubiquinone as an electron acceptor. Essential for the catalytic activity and assembly of complex I. This is NADH-ubiquinone oxidoreductase chain 6 (MT-ND6) from Urotrichus talpoides (Japanese shrew mole).